The chain runs to 258 residues: E3 ubiquitin ligase TRIM40 (258 aa).

The RING-type zinc-finger motif lies at Cys14–Cys56. The B box-type zinc finger occupies Gly66–Ile107. Zn(2+)-binding residues include Cys71, His74, Cys93, and His99. A coiled-coil region spans residues Ile107–Ala159.

This sequence belongs to the TRIM/RBCC family. Interacts with NEDD8. In terms of tissue distribution, highly expressed in normal gastrointestinal epithelia but that is down-regulated in gastrointestinal carcinomas and chronic inflammatory lesions of the gastrointestinal tract.

The catalysed reaction is S-ubiquitinyl-[E2 ubiquitin-conjugating enzyme]-L-cysteine + [acceptor protein]-L-lysine = [E2 ubiquitin-conjugating enzyme]-L-cysteine + N(6)-ubiquitinyl-[acceptor protein]-L-lysine.. In terms of biological role, E3 ubiquitin-protein ligase that plays a role in the limitation of the innate immune response. Mediates inhibition of the RLR signaling pathway by ubiquitinating RIGI and IFIH1 receptors, leading to their proteasomal degradation. Also promotes the neddylation of IKBKG/NEMO, stabilizing NFKBIA, and thereby inhibiting of NF-kappa-B nuclear translocation and activation. This Homo sapiens (Human) protein is E3 ubiquitin ligase TRIM40 (TRIM40).